We begin with the raw amino-acid sequence, 329 residues long: Legumin type B (329 aa).

Disordered stretches follow at residues 47–79 (PETQ…EDGN) and 97–149 (EEDT…GRNG). Residues 99-112 (DTAKRLRSPRDKRN) show a composition bias toward basic and acidic residues. The span at 129–138 (QQEEEEEEEE) shows a compositional bias: acidic residues. The Cupin type-1 domain occupies 161–308 (ENIAQPARAD…AFGLRQRQVT (148 aa)).

This sequence belongs to the 11S seed storage protein (globulins) family. In terms of assembly, hexamer; each subunit is composed of an acidic and a basic chain derived from a single precursor and linked by a disulfide bond.

This protein found in the seeds of many leguminous and non-leguminous plants is the source of sulfur-containing amino acids in seed meals. The protein is Legumin type B (LEB6) of Vicia faba (Broad bean).